A 2190-amino-acid chain; its full sequence is Voltage-dependent L-type calcium channel subunit alpha-1D (2190 aa).

Low complexity predominate over residues 1 to 10; it reads MQHHQQQQPE. Disordered stretches follow at residues 1–44 and 57–96; these read MQHH…SKQT and QAKA…SNSR. The Cytoplasmic portion of the chain corresponds to 1–121; it reads MQHHQQQQPE…RACISLVEWK (121 aa). Composition is skewed to polar residues over residues 31–44 and 63–76; these read PTTQ…SKQT and NMNT…GSLS. A compositionally biased stretch (basic residues) spans 77-88; the sequence is QRKRQQYAKSKK. The stretch at 108 to 404 is one I repeat; it reads NPIRRACISL…LVLGVLSGEF (297 aa). The chain crosses the membrane as a helical span at residues 122-140; that stretch reads PFDIFILLSIFANCVALAV. Over 141–158 the chain is Extracellular; sequence YIPFPEDDSNSTNHNLEK. Asparagine 150 carries N-linked (GlcNAc...) asparagine glycosylation. The helical transmembrane segment at 159–178 threads the bilayer; the sequence is VEYAFLIIFTVETFLKIIAY. Residues 179–190 are Cytoplasmic-facing; sequence GLLLHPNAYVRN. A helical membrane pass occupies residues 191–209; the sequence is GWNLLDFVIVVVGLFSVIL. Residues 210–230 lie on the Extracellular side of the membrane; that stretch reads EQLTKETEGGSHSGGKPGGFD. A helical transmembrane segment spans residues 231–249; that stretch reads VKALRAFRVLRPLRLVSGV. At 250 to 268 the chain is on the cytoplasmic side; that stretch reads PSLQVVLNSIIKAMVPLLH. A helical transmembrane segment spans residues 269–288; the sequence is IALLVLFVIIIYAIIGLELF. Residues 289–376 are Extracellular-facing; that stretch reads IGKMHKSCFL…WVNDAIGCEW (88 aa). Asparagine 324 carries an N-linked (GlcNAc...) asparagine glycan. Glutamate 359 contacts Ca(2+). A helical transmembrane segment spans residues 377–401; sequence PWIYFVSLIILGSFFVLNLVLGVLS. Residues 402–544 lie on the Cytoplasmic side of the membrane; that stretch reads GEFSKEREKA…RKCRAAVKSV (143 aa). A binding to the beta subunit region spans residues 424 to 441; that stretch reads QQLEEDLKGYLDWITQAE. The segment at 478–500 is disordered; that stretch reads GRSSNKHASMPTSETESVNTENV. Residues 530-776 form an II repeat; it reads NRFNRRKCRA…VFLAIAVDNL (247 aa). Residues 545–564 traverse the membrane as a helical segment; that stretch reads TFYWLVIVLVFLNTLTISSE. At 565–579 the chain is on the extracellular side; that stretch reads HYNQPDWLTQIQDIA. Residues 580-598 form a helical membrane-spanning segment; sequence NKVLLALFTCEMLVKMYSL. The Cytoplasmic portion of the chain corresponds to 599–606; it reads GLQAYFVS. A helical membrane pass occupies residues 607 to 625; it reads LFNRFDCFVVCGGIVETIL. The Extracellular segment spans residues 626 to 635; that stretch reads VELEIMSPLG. Residues 636–654 form a helical membrane-spanning segment; sequence ISVFRCVRLLRIFKVTRHW. Residues 655 to 673 are Cytoplasmic-facing; sequence ASLSNLVASLLNSMKSIAS. A helical transmembrane segment spans residues 674–694; sequence LLLLLFLFIIIFSLLGMQLFG. At 695–748 the chain is on the extracellular side; it reads GKFNFDETQTKRSTFDNFPQALLTVFQILTGEDWNAVMYDGIMAYGGPSSSGMI. Residue glutamate 726 participates in Ca(2+) binding. The helical transmembrane segment at 749–773 threads the bilayer; it reads VCIYFIILFICGNYILLNVFLAIAV. The Cytoplasmic portion of the chain corresponds to 774-907; sequence DNLADAESLN…VGCHRLINHH (134 aa). The span at 787–823 shows a compositional bias: basic and acidic residues; the sequence is KEEAEEKERKKNARKESLENKKSEKSEGDQKKPKDSK. The disordered stretch occupies residues 787 to 869; sequence KEEAEEKERK…VPAGPRPRRI (83 aa). The segment covering 847 to 859 has biased composition (acidic residues); it reads VGEDEEDEEDEPE. The stretch at 894–1176 is one III repeat; sequence NPIRVGCHRL…IFVGFVIVTF (283 aa). The chain crosses the membrane as a helical span at residues 908–926; it reads IFTNLILVFIMLSSVSLAA. Residues 927-942 lie on the Extracellular side of the membrane; that stretch reads EDPIRSHSFRNNILGY. A helical transmembrane segment spans residues 943 to 962; it reads ADYVFTSMFTFEIILKMTAF. At 963-974 the chain is on the cytoplasmic side; sequence GAFLHKGSFCRN. The chain crosses the membrane as a helical span at residues 975–993; the sequence is YFNLLDLLVVGVSLVSFGI. Over 994-999 the chain is Extracellular; that stretch reads QSSAIS. Residues 1000-1019 traverse the membrane as a helical segment; the sequence is VVKILRVLRVLRPLRAINRA. Topologically, residues 1020–1038 are cytoplasmic; it reads KGLKHVVQCVFVAIRTIGN. A helical membrane pass occupies residues 1039 to 1058; sequence IMIVTTLLQFMFACIGVQLF. The Extracellular portion of the chain corresponds to 1059–1148; the sequence is KGKFYKCTDE…VGPVYNYRVE (90 aa). A dihydropyridine binding region spans residues 1096–1186; that stretch reads RVWQNSDFNF…QEQGEQEYKN (91 aa). Glutamate 1122 provides a ligand contact to Ca(2+). A helical transmembrane segment spans residues 1149-1169; sequence ISIFFIIYIIIIAFFMMNIFV. Residues 1170 to 1226 are Cytoplasmic-facing; it reads GFVIVTFQEQGEQEYKNCELDKNQRQCVEYALKARPLRRYIPKNPYQYKFWYVVNST. The IV repeat unit spans residues 1213 to 1496; sequence NPYQYKFWYV…LFVAVIMDNF (284 aa). Residues 1227–1245 traverse the membrane as a helical segment; sequence GFEYIMFVLIMLNTLCLAM. The Extracellular segment spans residues 1246-1260; it reads QHYGQSKLFNDAMDI. The helical transmembrane segment at 1261–1280 threads the bilayer; it reads MNMVFTGVFTVEMVLKLIAF. The Cytoplasmic segment spans residues 1281 to 1297; the sequence is KPKIFVRKKERWLGYFS. Residues 1298–1319 traverse the membrane as a helical segment; the sequence is DAWNTFDSLIVIGSIVDVVLSE. Topologically, residues 1320–1342 are extracellular; sequence ADPKPTETVTTDESGNSEDSARI. The chain crosses the membrane as a helical span at residues 1343-1362; it reads SITFFRLFRVMRLVKLLSRG. Topologically, residues 1363 to 1381 are cytoplasmic; it reads EGIRTLLWTFIKSFQALPY. A helical transmembrane segment spans residues 1382 to 1401; that stretch reads VALLIAMLFFIYAVIGMQVF. The Extracellular segment spans residues 1402 to 1468; it reads GKVAMRDNNQ…GEEYTCGSNF (67 aa). The segment at 1449–1515 is dihydropyridine binding; the sequence is RCDPESDYNP…LGPHHLDEFK (67 aa). The segment at 1461 to 1504 is phenylalkylamine binding; it reads EYTCGSNFAIIYFISFYMLCAFLIINLFVAVIMDNFDYLTRDWS. The chain crosses the membrane as a helical span at residues 1469 to 1493; that stretch reads AIIYFISFYMLCAFLIINLFVAVIM. Over 1494-2190 the chain is Cytoplasmic; sequence DNFDYLTRDW…ADEMICITSL (697 aa). Disordered regions lie at residues 1736-1787, 1803-1833, 1917-1952, and 1995-2025; these read THRP…NANL, FGSH…SRRT, HGFF…RSSF, and SSKA…HTPY. A compositionally biased stretch (basic and acidic residues) spans 1805-1823; that stretch reads SHEHRSENGYHSYSRADHE. Over residues 1824–1833 the composition is skewed to basic residues; the sequence is KRRRPSSRRT.

Belongs to the calcium channel alpha-1 subunit (TC 1.A.1.11) family. CACNA1D subfamily. Voltage-dependent calcium channels are multisubunit complexes, consisting of alpha-1, alpha-2, beta and delta subunits in a 1:1:1:1 ratio. The channel activity is directed by the pore-forming and voltage-sensitive alpha-1 subunit. In many cases, this subunit is sufficient to generate voltage-sensitive calcium channel activity. The auxiliary subunits beta and alpha-2/delta linked by a disulfide bridge regulate the channel activity. Interacts with RIMBP2. Expressed in the basilar papilla of the cochlea.

It localises to the membrane. It carries out the reaction Ca(2+)(in) = Ca(2+)(out). The isoform alpha-1D gives rise to L-type calcium currents. Long-lasting (L-type) calcium channels belong to the 'high-voltage activated' (HVA) group. This chain is Voltage-dependent L-type calcium channel subunit alpha-1D (CACNA1D), found in Gallus gallus (Chicken).